We begin with the raw amino-acid sequence, 322 residues long: Anthranilate phosphoribosyltransferase (322 aa).

5-phospho-alpha-D-ribose 1-diphosphate is bound by residues glycine 71, 74 to 75, threonine 79, 81 to 84, 99 to 107, and alanine 111; these read GD, NVST, and KFGNRSASG. Glycine 71 is an anthranilate binding site. Serine 83 lines the Mg(2+) pocket. Asparagine 102 contributes to the anthranilate binding site. Residue arginine 157 participates in anthranilate binding. Mg(2+) contacts are provided by aspartate 215 and glutamate 216.

The protein belongs to the anthranilate phosphoribosyltransferase family. As to quaternary structure, homodimer. The cofactor is Mg(2+).

The enzyme catalyses N-(5-phospho-beta-D-ribosyl)anthranilate + diphosphate = 5-phospho-alpha-D-ribose 1-diphosphate + anthranilate. Its pathway is amino-acid biosynthesis; L-tryptophan biosynthesis; L-tryptophan from chorismate: step 2/5. In terms of biological role, catalyzes the transfer of the phosphoribosyl group of 5-phosphorylribose-1-pyrophosphate (PRPP) to anthranilate to yield N-(5'-phosphoribosyl)-anthranilate (PRA). The polypeptide is Anthranilate phosphoribosyltransferase (Thermoplasma acidophilum (strain ATCC 25905 / DSM 1728 / JCM 9062 / NBRC 15155 / AMRC-C165)).